The chain runs to 1139 residues: DNA-directed RNA polymerase subunit beta (1139 aa).

Positions 1085–1139 are disordered; the sequence is ADTSNRHTPSRPTYESVTSEDLSPSPAFTRVLRTADANASRSLEEDEDEEEEEDF. Residues 1086–1106 show a composition bias toward polar residues; that stretch reads DTSNRHTPSRPTYESVTSEDL. Acidic residues predominate over residues 1128–1139; the sequence is EEDEDEEEEEDF.

It belongs to the RNA polymerase beta chain family. As to quaternary structure, in cyanobacteria the RNAP catalytic core is composed of 2 alpha, 1 beta, 1 beta', 1 gamma and 1 omega subunit. When a sigma factor is associated with the core the holoenzyme is formed, which can initiate transcription.

It carries out the reaction RNA(n) + a ribonucleoside 5'-triphosphate = RNA(n+1) + diphosphate. DNA-dependent RNA polymerase catalyzes the transcription of DNA into RNA using the four ribonucleoside triphosphates as substrates. The protein is DNA-directed RNA polymerase subunit beta of Synechococcus sp. (strain JA-2-3B'a(2-13)) (Cyanobacteria bacterium Yellowstone B-Prime).